Reading from the N-terminus, the 213-residue chain is MAEVKIPQATAKRLPIYYRYLRLLSNSGKNRVSSTELAEAVKVDSATIRRDFSYFGALGKRGYGYDVQSLLDFFTKQLNQDTLTNVALVGVGNLGHALLNFNFHQSNHVRISAAFDVNEDITGTIQSGIPVYPMSDMKEQLKLQQIEIVILTVPAPVAQKVTDELVEVGVRGILNFTPLRITVPENIRVQNVDLTNEMETLIYFLNHFGSTEE.

Positions 16–55 (IYYRYLRLLSNSGKNRVSSTELAEAVKVDSATIRRDFSYF) form a DNA-binding region, H-T-H motif. 90-95 (GVGNLG) lines the NAD(+) pocket.

It belongs to the transcriptional regulatory Rex family. Homodimer.

The protein localises to the cytoplasm. In terms of biological role, modulates transcription in response to changes in cellular NADH/NAD(+) redox state. In Ligilactobacillus salivarius (strain UCC118) (Lactobacillus salivarius), this protein is Redox-sensing transcriptional repressor Rex.